Consider the following 960-residue polypeptide: Protein mono-ADP-ribosyltransferase PARP10 (960 aa).

Position 103 is an ADP-ribosyl glutamic acid (Glu-103). Over residues 325–341 (SMGSTSPVDPVESSTEL) the composition is skewed to polar residues. The segment at 325-346 (SMGSTSPVDPVESSTELPEQVG) is disordered. Ser-381 and Ser-388 each carry phosphoserine. A disordered region spans residues 553–576 (SPHGGEDRVPLEMEKEKPGGPGET). The segment covering 555–570 (HGGEDRVPLEMEKEKP) has biased composition (basic and acidic residues). A Ubiquitin-interacting motif is present at residues 604-621 (LEEEATLQLAIHRSLESQ). A Phosphoserine modification is found at Ser-617. Positions 649-856 (DEDTGGEAQL…CAHGFNRSFC (208 aa)) are myc binding. In terms of domain architecture, PARP catalytic spans 755–960 (PNLSEQGLKE…TCKNILPGTP (206 aa)). The short motif at 780 to 787 (QDVVRAFY) is the PIP-box element. Glu-831 is modified (ADP-ribosyl glutamic acid).

The protein belongs to the ARTD/PARP family. Interacts with MYC. Interacts with PARP14. Interacts (via-PIP box and ubiquitin-interacting motifs) with PCNA. In terms of processing, stimulated through its phosphorylation by CDK2. Acquires CDK-dependent phosphorylation through late-G1 to S phase, and from prometaphase to cytokinesis in the nucleolar organizing regions. Phosphorylation is suppressed in growth-arrested cells. Auto-mono-ADP-ribosylated on glutamate and lysine residues.

It is found in the cytoplasm. The protein localises to the nucleus. It carries out the reaction L-lysyl-[protein] + NAD(+) = N(6)-(ADP-D-ribosyl)-L-lysyl-[protein] + nicotinamide + H(+). The catalysed reaction is L-aspartyl-[protein] + NAD(+) = 4-O-(ADP-D-ribosyl)-L-aspartyl-[protein] + nicotinamide. It catalyses the reaction L-glutamyl-[protein] + NAD(+) = 5-O-(ADP-D-ribosyl)-L-glutamyl-[protein] + nicotinamide. Functionally, ADP-ribosyltransferase that mediates mono-ADP-ribosylation of glutamate and aspartate residues on target proteins. In contrast to PARP1 and PARP2, it is not able to mediate poly-ADP-ribosylation. Catalyzes mono-ADP-ribosylation of GSK3B, leading to negatively regulate GSK3B kinase activity. Involved in translesion DNA synthesis in response to DNA damage via its interaction with PCNA. This is Protein mono-ADP-ribosyltransferase PARP10 from Mus musculus (Mouse).